Here is a 579-residue protein sequence, read N- to C-terminus: Sulfite reductase [NADPH] hemoprotein beta-component (579 aa).

Residues C434, C440, C479, and C483 each coordinate [4Fe-4S] cluster. Residue C483 coordinates siroheme.

The protein belongs to the nitrite and sulfite reductase 4Fe-4S domain family. Alpha(8)-beta(8). The alpha component is a flavoprotein, the beta component is a hemoprotein. Requires siroheme as cofactor. It depends on [4Fe-4S] cluster as a cofactor.

It carries out the reaction hydrogen sulfide + 3 NADP(+) + 3 H2O = sulfite + 3 NADPH + 4 H(+). It functions in the pathway sulfur metabolism; hydrogen sulfide biosynthesis; hydrogen sulfide from sulfite (NADPH route): step 1/1. Component of the sulfite reductase complex that catalyzes the 6-electron reduction of sulfite to sulfide. This is one of several activities required for the biosynthesis of L-cysteine from sulfate. The polypeptide is Sulfite reductase [NADPH] hemoprotein beta-component (Salmonella choleraesuis (strain SC-B67)).